The following is a 272-amino-acid chain: 4-hydroxy-tetrahydrodipicolinate reductase (272 aa).

12–17 (GALGKM) serves as a coordination point for NAD(+). NADP(+) is bound at residue Lys39. Residues 102 to 104 (GTT) and 126 to 129 (SSNY) contribute to the NAD(+) site. His159 serves as the catalytic Proton donor/acceptor. (S)-2,3,4,5-tetrahydrodipicolinate is bound at residue His160. Residue Lys163 is the Proton donor of the active site. 169–170 (GT) contacts (S)-2,3,4,5-tetrahydrodipicolinate.

The protein belongs to the DapB family. As to quaternary structure, homotetramer.

It is found in the cytoplasm. The enzyme catalyses (S)-2,3,4,5-tetrahydrodipicolinate + NAD(+) + H2O = (2S,4S)-4-hydroxy-2,3,4,5-tetrahydrodipicolinate + NADH + H(+). It carries out the reaction (S)-2,3,4,5-tetrahydrodipicolinate + NADP(+) + H2O = (2S,4S)-4-hydroxy-2,3,4,5-tetrahydrodipicolinate + NADPH + H(+). Its pathway is amino-acid biosynthesis; L-lysine biosynthesis via DAP pathway; (S)-tetrahydrodipicolinate from L-aspartate: step 4/4. Its function is as follows. Catalyzes the conversion of 4-hydroxy-tetrahydrodipicolinate (HTPA) to tetrahydrodipicolinate. The protein is 4-hydroxy-tetrahydrodipicolinate reductase of Buchnera aphidicola subsp. Baizongia pistaciae (strain Bp).